A 342-amino-acid chain; its full sequence is Heat-inducible transcription repressor HrcA (342 aa).

It belongs to the HrcA family.

Its function is as follows. Negative regulator of class I heat shock genes (grpE-dnaK-dnaJ and groELS operons). Prevents heat-shock induction of these operons. This is Heat-inducible transcription repressor HrcA from Mesoplasma florum (strain ATCC 33453 / NBRC 100688 / NCTC 11704 / L1) (Acholeplasma florum).